The primary structure comprises 354 residues: Histidinol-phosphate aminotransferase (354 aa).

K208 is subject to N6-(pyridoxal phosphate)lysine.

This sequence belongs to the class-II pyridoxal-phosphate-dependent aminotransferase family. Histidinol-phosphate aminotransferase subfamily. In terms of assembly, homodimer. Pyridoxal 5'-phosphate is required as a cofactor.

It carries out the reaction L-histidinol phosphate + 2-oxoglutarate = 3-(imidazol-4-yl)-2-oxopropyl phosphate + L-glutamate. Its pathway is amino-acid biosynthesis; L-histidine biosynthesis; L-histidine from 5-phospho-alpha-D-ribose 1-diphosphate: step 7/9. This Aquifex aeolicus (strain VF5) protein is Histidinol-phosphate aminotransferase.